The following is a 266-amino-acid chain: Gasdermin bGSDM (266 aa).

4 consecutive transmembrane segments (beta stranded) span residues 67–83 (LQQNSTVSFDGKAGVDI), 95–113 (KLRGNINADHINSLQISYQ), 162–179 (SFSVSAQNKNGQNIDLEA), and 187–203 (ADVNVGRSKKDEVLMEY).

It belongs to the bacterial gasdermin family. As to quaternary structure, monomer. In terms of assembly, forms large, homooligomeric ring-shaped pores when inserted in membranes.

The protein localises to the cytoplasm. The protein resides in the cell inner membrane. The full-length protein before cleavage is inactive: intramolecular interactions between the N-terminal domain and the C-terminal region mediate autoinhibition. The pyroptosis-like-inducing activity is carried by the released N-terminal domain (Gasdermin bGSDM, N-terminus). Its function is as follows. Precursor of a pore-forming protein involved in defense against bacteriophages. Expression of bGSDM and the neighboring protease gene (Gilli_2517) is not toxic in E.coli. Cleavage of this precursor by its dedicated protease releases the active moiety (gasdermin bGSDM, N-terminus) which inserts into membranes, forming pores and triggering cell death. Functionally, pore-forming protein that causes membrane permeabilization via a pyroptosis-like activity. Makes ring-like pores when released. The protein is Gasdermin bGSDM of Gillisia limnaea (strain DSM 15749 / LMG 21470 / R-8282).